A 549-amino-acid chain; its full sequence is Chaperonin GroEL (549 aa).

ATP-binding positions include 29 to 32 (TAGP), lysine 50, 86 to 90 (DGTTT), glycine 418, and aspartate 499.

This sequence belongs to the chaperonin (HSP60) family. In terms of assembly, forms a cylinder of 14 subunits composed of two heptameric rings stacked back-to-back. Interacts with the co-chaperonin GroES.

It localises to the cytoplasm. It catalyses the reaction ATP + H2O + a folded polypeptide = ADP + phosphate + an unfolded polypeptide.. Its function is as follows. Together with its co-chaperonin GroES, plays an essential role in assisting protein folding. The GroEL-GroES system forms a nano-cage that allows encapsulation of the non-native substrate proteins and provides a physical environment optimized to promote and accelerate protein folding. In Wolbachia sp. subsp. Drosophila simulans (strain wRi), this protein is Chaperonin GroEL.